Here is a 274-residue protein sequence, read N- to C-terminus: Copper chaperone for superoxide dismutase (274 aa).

Residues 11 to 74 (LCTLEFAVQM…LLEGTGRQAV (64 aa)) form the HMA domain. The Cu cation site is built by Cys22 and Cys25. Lys76 is covalently cross-linked (Glycyl lysine isopeptide (Lys-Gly) (interchain with G-Cter in ubiquitin)). The interval 88–234 (AAVAILGGPG…LACGIIARSA (147 aa)) is superoxide dismutase-like. A disulfide bridge links Cys141 with Cys227. Zn(2+)-binding residues include His147, His155, His164, and Asp167. Glycyl lysine isopeptide (Lys-Gly) (interchain with G-Cter in ubiquitin) cross-links involve residues Lys189, Lys216, and Lys241. Cu cation contacts are provided by Cys244 and Cys246. A Phosphoserine modification is found at Ser267.

The protein in the C-terminal section; belongs to the Cu-Zn superoxide dismutase family. As to quaternary structure, homodimer, and heterodimer with SOD1. Interacts with COMMD1. Interacts with XIAP/BIRC4. Interacts with SLC31A1(via C-terminal domain); this interaction is Cu(1+)-mediated. The heterodimer CCS:SOD1 interacts with SLC31A1; this heterotrimer is Cu(1+)-mediated and its maintenance is regulated through SOD1 activation. Requires Cu(2+) as cofactor. Zn(2+) is required as a cofactor. In terms of processing, ubiquitinion by XIAP/BIRC4 leads to enhancement of its chaperone activity toward its physiologic target, SOD1, rather than proteasomal degradation. XIAP/BIRC4 preferentially ubiquitinates at Lys-241. In terms of tissue distribution, ubiquitous.

The protein localises to the cytoplasm. Its function is as follows. Delivers copper to copper zinc superoxide dismutase (SOD1). The protein is Copper chaperone for superoxide dismutase of Homo sapiens (Human).